The chain runs to 337 residues: Ketol-acid reductoisomerase (NADP(+)) (337 aa).

Residues 3–183 (LEMFYDDDAD…GGTRAGVIKT (181 aa)) enclose the KARI N-terminal Rossmann domain. Residues 26 to 29 (YGSQ), K49, S52, S54, and 84 to 87 (DTAQ) each bind NADP(+). H109 is a catalytic residue. G135 is a binding site for NADP(+). The region spanning 184 to 329 (TFKDETETDL…KKLRDLMSWV (146 aa)) is the KARI C-terminal knotted domain. Positions 192, 196, 228, and 232 each coordinate Mg(2+). S253 contributes to the substrate binding site.

It belongs to the ketol-acid reductoisomerase family. Mg(2+) is required as a cofactor.

The catalysed reaction is (2R)-2,3-dihydroxy-3-methylbutanoate + NADP(+) = (2S)-2-acetolactate + NADPH + H(+). The enzyme catalyses (2R,3R)-2,3-dihydroxy-3-methylpentanoate + NADP(+) = (S)-2-ethyl-2-hydroxy-3-oxobutanoate + NADPH + H(+). Its pathway is amino-acid biosynthesis; L-isoleucine biosynthesis; L-isoleucine from 2-oxobutanoate: step 2/4. It participates in amino-acid biosynthesis; L-valine biosynthesis; L-valine from pyruvate: step 2/4. Involved in the biosynthesis of branched-chain amino acids (BCAA). Catalyzes an alkyl-migration followed by a ketol-acid reduction of (S)-2-acetolactate (S2AL) to yield (R)-2,3-dihydroxy-isovalerate. In the isomerase reaction, S2AL is rearranged via a Mg-dependent methyl migration to produce 3-hydroxy-3-methyl-2-ketobutyrate (HMKB). In the reductase reaction, this 2-ketoacid undergoes a metal-dependent reduction by NADPH to yield (R)-2,3-dihydroxy-isovalerate. The protein is Ketol-acid reductoisomerase (NADP(+)) of Mycobacterium bovis (strain BCG / Pasteur 1173P2).